Reading from the N-terminus, the 225-residue chain is Putative adhesin RT0816 (225 aa).

The first 22 residues, 1–22 (MKKLLLIAATSATILSSSISFA), serve as a signal peptide directing secretion.

In Rickettsia typhi (strain ATCC VR-144 / Wilmington), this protein is Putative adhesin RT0816.